Here is a 502-residue protein sequence, read N- to C-terminus: D-erythritol 1-phosphate dehydrogenase (502 aa).

8–36 (DLFVIGGGINGAGVARDAAGRGLKVVLAE) is a binding site for FAD.

Belongs to the FAD-dependent glycerol-3-phosphate dehydrogenase family. It depends on FAD as a cofactor.

The enzyme catalyses D-erythritol 1-phosphate + NADP(+) = D-erythrulose 1-phosphate + NADPH + H(+). The protein operates within carbohydrate metabolism; erythritol degradation. Functionally, catalyzes the oxydation of D-erythritol 1-phosphate to D-erythrulose 1-phosphate. The sequence is that of D-erythritol 1-phosphate dehydrogenase from Brucella abortus (strain 2308).